A 166-amino-acid polypeptide reads, in one-letter code: Large ribosomal subunit protein uL10 (166 aa).

It belongs to the universal ribosomal protein uL10 family. Part of the ribosomal stalk of the 50S ribosomal subunit. The N-terminus interacts with L11 and the large rRNA to form the base of the stalk. The C-terminus forms an elongated spine to which L12 dimers bind in a sequential fashion forming a multimeric L10(L12)X complex.

Forms part of the ribosomal stalk, playing a central role in the interaction of the ribosome with GTP-bound translation factors. In Pseudomonas paraeruginosa (strain DSM 24068 / PA7) (Pseudomonas aeruginosa (strain PA7)), this protein is Large ribosomal subunit protein uL10.